A 210-amino-acid polypeptide reads, in one-letter code: 3-hexulose-6-phosphate synthase (210 aa).

The protein belongs to the HPS/KGPDC family. HPS subfamily.

It catalyses the reaction D-ribulose 5-phosphate + formaldehyde = D-arabino-hex-3-ulose 6-phosphate. It functions in the pathway one-carbon metabolism; formaldehyde assimilation via RuMP pathway; D-fructose 6-phosphate from D-ribulose 5-phosphate and formaldehyde: step 1/2. Its function is as follows. Catalyzes the condensation of ribulose 5-phosphate with formaldehyde to form 3-hexulose 6-phosphate. This is 3-hexulose-6-phosphate synthase from Staphylococcus haemolyticus (strain JCSC1435).